The primary structure comprises 326 residues: Zinc finger protein 830 (326 aa).

The span at 1 to 11 shows a compositional bias: basic residues; sequence MAASRKGKAVK. The tract at residues 1–37 is disordered; the sequence is MAASRKGKAVKAVKQEDLRRLMQETRRDSGRQKRVES. Residues 13-36 are compositionally biased toward basic and acidic residues; that stretch reads VKQEDLRRLMQETRRDSGRQKRVE. Residues 50 to 72 form a C2H2-type zinc finger; the sequence is CALCDAPVKNALLWQTHVLGKQH. Residues 83–108 are compositionally biased toward low complexity; the sequence is TAPAHTPAPAHTPAHTPAAASSSSST. Disordered regions lie at residues 83–214, 237–257, and 276–309; these read TAPA…PVRD, EMRQ…EEGR, and EELR…EEEE. A compositionally biased stretch (polar residues) spans 180 to 195; the sequence is HSGSVSKAEQQESQEP. Positions 224-295 form a coiled coil; sequence KDQLEREWEE…RSRRRSQRRE (72 aa). Over residues 276–286 the composition is skewed to basic and acidic residues; that stretch reads EELRAKQETAR. Over residues 298-309 the composition is skewed to acidic residues; it reads PMQEEEPLEEEE.

The protein resides in the nucleus. It localises to the chromosome. The protein localises to the nucleus speckle. In terms of biological role, may act as an important regulator of the cell cycle that participates in the maintenance of genome integrity. This chain is Zinc finger protein 830, found in Danio rerio (Zebrafish).